Reading from the N-terminus, the 145-residue chain is uncharacterized protein (145 aa).

Residues Val97 and Asn121 each coordinate substrate.

The protein belongs to the D-isomer specific 2-hydroxyacid dehydrogenase family. FDH subfamily.

This is an uncharacterized protein from Saccharomyces cerevisiae (strain ATCC 204508 / S288c) (Baker's yeast).